We begin with the raw amino-acid sequence, 466 residues long: 3-isopropylmalate dehydratase large subunit (466 aa).

[4Fe-4S] cluster is bound by residues C347, C407, and C410.

Belongs to the aconitase/IPM isomerase family. LeuC type 1 subfamily. Heterodimer of LeuC and LeuD. [4Fe-4S] cluster is required as a cofactor.

It carries out the reaction (2R,3S)-3-isopropylmalate = (2S)-2-isopropylmalate. Its pathway is amino-acid biosynthesis; L-leucine biosynthesis; L-leucine from 3-methyl-2-oxobutanoate: step 2/4. Functionally, catalyzes the isomerization between 2-isopropylmalate and 3-isopropylmalate, via the formation of 2-isopropylmaleate. The protein is 3-isopropylmalate dehydratase large subunit of Escherichia coli O17:K52:H18 (strain UMN026 / ExPEC).